The chain runs to 340 residues: Annexin A2-B (340 aa).

Residues 2 to 25 (ALIHEILGKLSLEGNQSSSRQSKL) form a P10 binding site region. Residue serine 27 is modified to Phosphoserine; by PKC. Annexin repeat units lie at residues 34 to 105 (FDAE…GLIK), 106 to 177 (TRPQ…ALAK), 190 to 262 (EKID…NLVQ), and 266 to 337 (NKPL…NLCG).

The protein belongs to the annexin family. Tetramer of 2 light chains (p10 proteins) and 2 heavy chains (p36 proteins). In terms of tissue distribution, adult brain, heart, striated muscle, liver, kidney, and very high levels in skin.

It is found in the secreted. It localises to the extracellular space. Its subcellular location is the extracellular matrix. The protein resides in the basement membrane. Its function is as follows. Calcium-regulated membrane-binding protein whose affinity for calcium is greatly enhanced by anionic phospholipids. It binds two calcium ions with high affinity. This Xenopus laevis (African clawed frog) protein is Annexin A2-B (anxa2-b).